The following is a 157-amino-acid chain: 2-C-methyl-D-erythritol 2,4-cyclodiphosphate synthase (157 aa).

A divalent metal cation contacts are provided by Asp-8 and His-10. 4-CDP-2-C-methyl-D-erythritol 2-phosphate-binding positions include Asp-8–His-10 and His-34–Ser-35. His-42 contacts a divalent metal cation. 4-CDP-2-C-methyl-D-erythritol 2-phosphate contacts are provided by residues Asp-56–Gly-58, Phe-61–Asp-65, Ala-100–Ala-106, Thr-132–Glu-135, Phe-139, and Arg-142.

The protein belongs to the IspF family. As to quaternary structure, homotrimer. Requires a divalent metal cation as cofactor.

The catalysed reaction is 4-CDP-2-C-methyl-D-erythritol 2-phosphate = 2-C-methyl-D-erythritol 2,4-cyclic diphosphate + CMP. It participates in isoprenoid biosynthesis; isopentenyl diphosphate biosynthesis via DXP pathway; isopentenyl diphosphate from 1-deoxy-D-xylulose 5-phosphate: step 4/6. Involved in the biosynthesis of isopentenyl diphosphate (IPP) and dimethylallyl diphosphate (DMAPP), two major building blocks of isoprenoid compounds. Catalyzes the conversion of 4-diphosphocytidyl-2-C-methyl-D-erythritol 2-phosphate (CDP-ME2P) to 2-C-methyl-D-erythritol 2,4-cyclodiphosphate (ME-CPP) with a corresponding release of cytidine 5-monophosphate (CMP). This is 2-C-methyl-D-erythritol 2,4-cyclodiphosphate synthase from Azotobacter vinelandii (strain DJ / ATCC BAA-1303).